A 481-amino-acid chain; its full sequence is PTS system N-acetylmuramic acid-specific EIIBC component (481 aa).

One can recognise a PTS EIIB type-1 domain in the interval 1-89; that stretch reads MAKITQTMMA…NALIESGDNV (89 aa). The active-site Phosphocysteine intermediate; for EIIB activity is Cys28. One can recognise a PTS EIIC type-1 domain in the interval 122-481; it reads SKFATIFTPL…FFGCKDVDLS (360 aa). The next 10 helical transmembrane spans lie at 124-144, 165-185, 190-210, 225-245, 263-283, 307-327, 342-362, 376-396, 406-426, and 448-468; these read FATI…LLGI, LVAY…ILIG, QAFG…VLGY, FFGF…AAIL, MILT…LIIM, AAIL…QGFV, LFPI…ALYA, GAII…VTLP, IGGA…LPVG, and IFAG…VGFA.

Its subcellular location is the cell inner membrane. The enzyme catalyses N-acetyl-beta-D-muramate(out) + N(pros)-phospho-L-histidyl-[protein] = N-acetyl-beta-D-muramate 6-phosphate(in) + L-histidyl-[protein]. Functionally, the phosphoenolpyruvate-dependent sugar phosphotransferase system (sugar PTS), a major carbohydrate active transport system, catalyzes the phosphorylation of incoming sugar substrates concomitantly with their translocation across the cell membrane. This system is involved in N-acetylmuramic acid (MurNAc) transport, yielding cytoplasmic MurNAc-6-P. Is also able to take up anhydro-N-acetylmuramic acid (anhMurNAc), but cannot phosphorylate the carbon 6, probably because of the 1,6-anhydro ring. The protein is PTS system N-acetylmuramic acid-specific EIIBC component (murP) of Vibrio cholerae serotype O1 (strain ATCC 39315 / El Tor Inaba N16961).